The primary structure comprises 94 residues: Co-chaperonin GroES (94 aa).

This sequence belongs to the GroES chaperonin family. As to quaternary structure, heptamer of 7 subunits arranged in a ring. Interacts with the chaperonin GroEL.

The protein resides in the cytoplasm. Its function is as follows. Together with the chaperonin GroEL, plays an essential role in assisting protein folding. The GroEL-GroES system forms a nano-cage that allows encapsulation of the non-native substrate proteins and provides a physical environment optimized to promote and accelerate protein folding. GroES binds to the apical surface of the GroEL ring, thereby capping the opening of the GroEL channel. This is Co-chaperonin GroES from Lactococcus lactis subsp. lactis (strain IL1403) (Streptococcus lactis).